Here is a 425-residue protein sequence, read N- to C-terminus: Dihydroorotase (425 aa).

Residues His-56 and His-58 each contribute to the Zn(2+) site. Substrate-binding positions include His-58–Arg-60 and Asn-90. Positions 148, 175, and 228 each coordinate Zn(2+). Asn-274 is a substrate binding site. Asp-301 lines the Zn(2+) pocket. Asp-301 is a catalytic residue. Substrate is bound by residues His-305 and Phe-319 to Gly-320.

This sequence belongs to the metallo-dependent hydrolases superfamily. DHOase family. Class I DHOase subfamily. It depends on Zn(2+) as a cofactor.

It carries out the reaction (S)-dihydroorotate + H2O = N-carbamoyl-L-aspartate + H(+). It functions in the pathway pyrimidine metabolism; UMP biosynthesis via de novo pathway; (S)-dihydroorotate from bicarbonate: step 3/3. Functionally, catalyzes the reversible cyclization of carbamoyl aspartate to dihydroorotate. This Lactobacillus delbrueckii subsp. bulgaricus (strain ATCC 11842 / DSM 20081 / BCRC 10696 / JCM 1002 / NBRC 13953 / NCIMB 11778 / NCTC 12712 / WDCM 00102 / Lb 14) protein is Dihydroorotase.